Here is a 348-residue protein sequence, read N- to C-terminus: Dihydroorotase (348 aa).

His17 and His19 together coordinate Zn(2+). Residues His19–Arg21 and Asn45 contribute to the substrate site. Residues Lys103, His140, and His178 each contribute to the Zn(2+) site. At Lys103 the chain carries N6-carboxylysine. Position 140 (His140) interacts with substrate. Leu223 lines the substrate pocket. Asp251 lines the Zn(2+) pocket. Asp251 is a catalytic residue. Substrate-binding residues include His255 and Ala267.

It belongs to the metallo-dependent hydrolases superfamily. DHOase family. Class II DHOase subfamily. Homodimer. It depends on Zn(2+) as a cofactor.

It catalyses the reaction (S)-dihydroorotate + H2O = N-carbamoyl-L-aspartate + H(+). Its pathway is pyrimidine metabolism; UMP biosynthesis via de novo pathway; (S)-dihydroorotate from bicarbonate: step 3/3. Functionally, catalyzes the reversible cyclization of carbamoyl aspartate to dihydroorotate. The protein is Dihydroorotase of Shigella flexneri serotype 5b (strain 8401).